The chain runs to 103 residues: Large ribosomal subunit protein bL21 (103 aa).

Belongs to the bacterial ribosomal protein bL21 family. Part of the 50S ribosomal subunit. Contacts protein L20.

Functionally, this protein binds to 23S rRNA in the presence of protein L20. The sequence is that of Large ribosomal subunit protein bL21 from Desulforudis audaxviator (strain MP104C).